Here is a 284-residue protein sequence, read N- to C-terminus: 2-dehydro-3-deoxyphosphooctonate aldolase (284 aa).

The protein belongs to the KdsA family.

Its subcellular location is the cytoplasm. The enzyme catalyses D-arabinose 5-phosphate + phosphoenolpyruvate + H2O = 3-deoxy-alpha-D-manno-2-octulosonate-8-phosphate + phosphate. Its pathway is carbohydrate biosynthesis; 3-deoxy-D-manno-octulosonate biosynthesis; 3-deoxy-D-manno-octulosonate from D-ribulose 5-phosphate: step 2/3. It participates in bacterial outer membrane biogenesis; lipopolysaccharide biosynthesis. The polypeptide is 2-dehydro-3-deoxyphosphooctonate aldolase (Haemophilus influenzae (strain PittEE)).